Here is a 262-residue protein sequence, read N- to C-terminus: Probable lipoprotein EnvF (262 aa).

A signal peptide spans 1-25 (MNKIHVTYKNLLLPITFIAATLISA). The N-palmitoyl cysteine moiety is linked to residue C26. The S-diacylglycerol cysteine moiety is linked to residue C26. Positions 227–262 (EAEKAQQLVEQSRKDIESQRKKAAGKMNEIQQTFKK) are disordered. A compositionally biased stretch (basic and acidic residues) spans 237 to 246 (QSRKDIESQR).

It localises to the cell membrane. The polypeptide is Probable lipoprotein EnvF (envF) (Salmonella typhimurium (strain LT2 / SGSC1412 / ATCC 700720)).